We begin with the raw amino-acid sequence, 455 residues long: ATP-dependent protease ATPase subunit HslU (455 aa).

ATP contacts are provided by residues Val23, 65–70 (GVGKTE), Asp266, Glu333, and Arg405.

It belongs to the ClpX chaperone family. HslU subfamily. As to quaternary structure, a double ring-shaped homohexamer of HslV is capped on each side by a ring-shaped HslU homohexamer. The assembly of the HslU/HslV complex is dependent on binding of ATP.

It localises to the cytoplasm. Functionally, ATPase subunit of a proteasome-like degradation complex; this subunit has chaperone activity. The binding of ATP and its subsequent hydrolysis by HslU are essential for unfolding of protein substrates subsequently hydrolyzed by HslV. HslU recognizes the N-terminal part of its protein substrates and unfolds these before they are guided to HslV for hydrolysis. This Xanthomonas oryzae pv. oryzae (strain MAFF 311018) protein is ATP-dependent protease ATPase subunit HslU.